The following is a 341-amino-acid chain: NADH-quinone oxidoreductase subunit H (341 aa).

8 helical membrane passes run 16 to 36, 86 to 106, 119 to 139, 165 to 185, 191 to 211, 254 to 274, 276 to 296, and 315 to 335; these read LLII…AVAY, VVFV…WAVI, VGVL…IMAG, IGFI…SDVV, MWFI…GLAE, GAMT…LGWL, IPGL…FLWV, and VFLP…TAFG.

This sequence belongs to the complex I subunit 1 family. In terms of assembly, NDH-1 is composed of 14 different subunits. Subunits NuoA, H, J, K, L, M, N constitute the membrane sector of the complex.

It is found in the cell inner membrane. The catalysed reaction is a quinone + NADH + 5 H(+)(in) = a quinol + NAD(+) + 4 H(+)(out). NDH-1 shuttles electrons from NADH, via FMN and iron-sulfur (Fe-S) centers, to quinones in the respiratory chain. The immediate electron acceptor for the enzyme in this species is believed to be ubiquinone. Couples the redox reaction to proton translocation (for every two electrons transferred, four hydrogen ions are translocated across the cytoplasmic membrane), and thus conserves the redox energy in a proton gradient. This subunit may bind ubiquinone. The polypeptide is NADH-quinone oxidoreductase subunit H (Paramagnetospirillum magneticum (strain ATCC 700264 / AMB-1) (Magnetospirillum magneticum)).